Consider the following 288-residue polypeptide: MGCCGCSGGCGSGCGGCGSGCGGCGSGCGGCGSGCGGCGSGCGGCGSSCCVPICCCKPVCCCVPACSCSSCGSCGGSKGGYGSCGGSKGGCVSCGGSKGGCGSCGGSKGGCGSCGGSKGGCGSCGGSKGGCVSCGGSKGGCGSCGGSKGGCVSCGGSKGGCGSCGGSKGGCGSCGGSKGGCGSCGGSKGGCGSCGCSQCSCCKPCCCSSGCGSSCCQSSCCKPCCSSSGCGSSCCQSSCCKPYCCQSSCCKPCCSSSGCGSSCCQSSCCNPCCSQSSCCVPVCCQCKI.

A run of 9 repeats spans residues 49 to 52, 55 to 58, 61 to 64, 201 to 204, 220 to 223, 239 to 242, 249 to 252, 268 to 271, and 278 to 281. The tract at residues 49-281 is 9 X 4 AA repeats of C-C-X-P; that stretch reads CCVPICCCKP…CCSQSSCCVP (233 aa).

It belongs to the KRTAP type 5 family. As to quaternary structure, interacts with hair keratins. As to expression, restricted to hair root, not detected in any other tissues.

Functionally, in the hair cortex, hair keratin intermediate filaments are embedded in an interfilamentous matrix, consisting of hair keratin-associated protein (KRTAP), which are essential for the formation of a rigid and resistant hair shaft through their extensive disulfide bond cross-linking with abundant cysteine residues of hair keratins. The matrix proteins include the high-sulfur and high-glycine-tyrosine keratins. The sequence is that of Keratin-associated protein 5-4 (KRTAP5-4) from Homo sapiens (Human).